The chain runs to 65 residues: MKMKMIVVISILLIVFSLSSKAMSLEDEQESVQREEDDLLGFSEEDLKAIKEHRAKNAGRFDPAV.

Residues 1–24 (MKMKMIVVISILLIVFSLSSKAMS) form the signal peptide. The propeptide occupies 25–34 (LEDEQESVQR). A58 is modified (alanine amide). Residues 59 to 65 (GRFDPAV) constitute a propeptide that is removed on maturation.

In terms of tissue distribution, expressed by the venom gland.

It is found in the secreted. In terms of biological role, helical wheel projections predict no hydrophobic face, suggesting a non-amphipathic peptide. Does not show antifungal activity. This is Peptide ToAcP from Tityus obscurus (Amazonian scorpion).